Here is an 858-residue protein sequence, read N- to C-terminus: Bifunctional uridylyltransferase/uridylyl-removing enzyme (858 aa).

The uridylyltransferase stretch occupies residues 1–324 (MSAHAAPSPE…PATSGITRVL (324 aa)). A uridylyl-removing region spans residues 325–681 (SPDRFVEKQG…ARPSPIGDAL (357 aa)). The HD domain occupies 443 to 565 (VDQHILMVLR…VGNERYLTAL (123 aa)). 2 consecutive ACT domains span residues 682 to 761 (QVLV…PEPS) and 790 to 858 (ILSV…AIAV).

The protein belongs to the GlnD family. Mg(2+) is required as a cofactor.

It carries out the reaction [protein-PII]-L-tyrosine + UTP = [protein-PII]-uridylyl-L-tyrosine + diphosphate. The catalysed reaction is [protein-PII]-uridylyl-L-tyrosine + H2O = [protein-PII]-L-tyrosine + UMP + H(+). Uridylyltransferase (UTase) activity is inhibited by glutamine, while glutamine activates uridylyl-removing (UR) activity. In terms of biological role, modifies, by uridylylation and deuridylylation, the PII regulatory proteins (GlnB and homologs), in response to the nitrogen status of the cell that GlnD senses through the glutamine level. Under low glutamine levels, catalyzes the conversion of the PII proteins and UTP to PII-UMP and PPi, while under higher glutamine levels, GlnD hydrolyzes PII-UMP to PII and UMP (deuridylylation). Thus, controls uridylylation state and activity of the PII proteins, and plays an important role in the regulation of nitrogen fixation and metabolism. The chain is Bifunctional uridylyltransferase/uridylyl-removing enzyme from Burkholderia lata (strain ATCC 17760 / DSM 23089 / LMG 22485 / NCIMB 9086 / R18194 / 383).